The primary structure comprises 432 residues: Trigger factor (432 aa).

The region spanning 161–246 (EDRVTIDFTG…LKKVEERELP (86 aa)) is the PPIase FKBP-type domain.

The protein belongs to the FKBP-type PPIase family. Tig subfamily.

Its subcellular location is the cytoplasm. It carries out the reaction [protein]-peptidylproline (omega=180) = [protein]-peptidylproline (omega=0). Functionally, involved in protein export. Acts as a chaperone by maintaining the newly synthesized protein in an open conformation. Functions as a peptidyl-prolyl cis-trans isomerase. The polypeptide is Trigger factor (Klebsiella pneumoniae (strain 342)).